Consider the following 415-residue polypeptide: Putative competence-damage inducible protein (415 aa).

It belongs to the CinA family.

This is Putative competence-damage inducible protein from Limosilactobacillus reuteri (strain DSM 20016) (Lactobacillus reuteri).